We begin with the raw amino-acid sequence, 314 residues long: MTERNKTVISQFLLLGLPIPPEHQQLFYALFLVMYLTTVLGNLIIIILIILDSHLHTPMYLFLSNLSFSDLCFSSVTMPKLLQNMQSQVPSIPYAGCLAQIYFFLFFGDLGNFLLVAMAYDRYVAICYPLHYTTIMSPRLCVSLVVLSWVLTTFHAMLHTLLMARLSFCEDNVIPHYFCDMSALLKLACSDTRVNEVVIFIVASIFLVLPFALITMSYVRIVSSILKVPSSQGIYKAFSTCGSHLSVVSLFYGTVIGLYLSPSSNNSTVKDTVMSLMYTVVTPMLNPFIYSLRNRDIKGALERVFCKRKIQLNL.

At 1-29 (MTERNKTVISQFLLLGLPIPPEHQQLFYA) the chain is on the extracellular side. Asparagine 5 carries an N-linked (GlcNAc...) asparagine glycan. The chain crosses the membrane as a helical span at residues 30–50 (LFLVMYLTTVLGNLIIIILII). At 51–57 (LDSHLHT) the chain is on the cytoplasmic side. A helical membrane pass occupies residues 58 to 78 (PMYLFLSNLSFSDLCFSSVTM). Over 79-97 (PKLLQNMQSQVPSIPYAGC) the chain is Extracellular. An intrachain disulfide couples cysteine 97 to cysteine 179. Residues 98–118 (LAQIYFFLFFGDLGNFLLVAM) form a helical membrane-spanning segment. Residues 119–143 (AYDRYVAICYPLHYTTIMSPRLCVS) are Cytoplasmic-facing. The chain crosses the membrane as a helical span at residues 144–164 (LVVLSWVLTTFHAMLHTLLMA). Topologically, residues 165-196 (RLSFCEDNVIPHYFCDMSALLKLACSDTRVNE) are extracellular. A helical transmembrane segment spans residues 197-217 (VVIFIVASIFLVLPFALITMS). Topologically, residues 218–239 (YVRIVSSILKVPSSQGIYKAFS) are cytoplasmic. Residues 240–260 (TCGSHLSVVSLFYGTVIGLYL) form a helical membrane-spanning segment. The Extracellular portion of the chain corresponds to 261-271 (SPSSNNSTVKD). N-linked (GlcNAc...) asparagine glycosylation is found at asparagine 265 and asparagine 266. The chain crosses the membrane as a helical span at residues 272–292 (TVMSLMYTVVTPMLNPFIYSL). Over 293–314 (RNRDIKGALERVFCKRKIQLNL) the chain is Cytoplasmic.

It belongs to the G-protein coupled receptor 1 family. In terms of tissue distribution, olfactory epithelium.

The protein resides in the cell membrane. Odorant receptor. Activated by a lily-derived aldehyde as well as other odorants. May signal through an inositol 1,4,5-trisphosphate (IP3) second messenger system. The sequence is that of Olfactory receptor 1E16 from Mus musculus (Mouse).